Consider the following 423-residue polypeptide: Enolase (423 aa).

Gln-164 is a binding site for (2R)-2-phosphoglycerate. Glu-206 (proton donor) is an active-site residue. Asp-243, Glu-289, and Asp-316 together coordinate Mg(2+). Residues Lys-341, Arg-370, Ser-371, and Lys-392 each contribute to the (2R)-2-phosphoglycerate site. Lys-341 acts as the Proton acceptor in catalysis.

The protein belongs to the enolase family. Mg(2+) serves as cofactor.

Its subcellular location is the cytoplasm. The protein localises to the secreted. It localises to the cell surface. It catalyses the reaction (2R)-2-phosphoglycerate = phosphoenolpyruvate + H2O. It participates in carbohydrate degradation; glycolysis; pyruvate from D-glyceraldehyde 3-phosphate: step 4/5. Functionally, catalyzes the reversible conversion of 2-phosphoglycerate (2-PG) into phosphoenolpyruvate (PEP). It is essential for the degradation of carbohydrates via glycolysis. The polypeptide is Enolase (Desulfotalea psychrophila (strain LSv54 / DSM 12343)).